The primary structure comprises 297 residues: 4,5-DOPA dioxygenase extradiol-like protein (297 aa).

Residues H30, H82, H205, and H263 each contribute to the Zn(2+) site.

The protein belongs to the DODA-type extradiol aromatic ring-opening dioxygenase family. Zn(2+) is required as a cofactor.

It is found in the cytoplasm. The protein localises to the nucleus. In terms of biological role, may be involved in the metabolism of aromatic compounds. The protein is 4,5-DOPA dioxygenase extradiol-like protein of Schizosaccharomyces pombe (strain 972 / ATCC 24843) (Fission yeast).